The sequence spans 768 residues: Protein STRUBBELIG (768 aa).

Residues 1 to 24 (MSFTRWEVFFGLSVLALTMPFSAG) form the signal peptide. The Extracellular portion of the chain corresponds to 25–341 (VTNLRDVSAI…GSGKFWSTQR (317 aa)). Cysteine 57 and cysteine 66 are disulfide-bonded. Asparagine 70 carries N-linked (GlcNAc...) asparagine glycosylation. LRR repeat units lie at residues 94–115 (SIQV…ALPS), 116–139 (SIRN…SFLS), 140–162 (DLSE…FQQL), 164–186 (KLTK…MGDL), 188–210 (SLKI…EDLF), and 211–231 (LTDL…NLLK). Asparagine 119 is a glycosylation site (N-linked (GlcNAc...) asparagine). The segment at 241-334 (PFNTSIITPP…ISPPSGSGSG (94 aa)) is disordered. Asparagine 243 is a glycosylation site (N-linked (GlcNAc...) asparagine). 2 stretches are compositionally biased toward pro residues: residues 248–283 (TPPP…PFAP) and 291–301 (QHPPPSPPLVW). Over residues 315 to 334 (NSVSGQPTLQISPPSGSGSG) the composition is skewed to polar residues. A helical membrane pass occupies residues 342-362 (IILVVSSVAIIVLVSGLCVTL). Residues 363-768 (WRCCRSKIYN…EIVQDLQHMI (406 aa)) are Cytoplasmic-facing. A disordered region spans residues 385-477 (PYFNKPPSQP…RAAHFPPGLN (93 aa)). Residues 439 to 464 (SYYNKDVNTPQKPLQQPPRQFQSNDT) show a composition bias toward polar residues. The region spanning 497 to 768 (FSEENIIGEG…EIVQDLQHMI (272 aa)) is the Protein kinase domain. ATP contacts are provided by residues 503-511 (IGEGSIGNV) and lysine 525.

It belongs to the protein kinase superfamily. Ser/Thr protein kinase family. Interacts (via intra-cellular domain) with AN; this interaction is not required for correct subcellular localization and recycling of SUB. Binds to QKY and POQ at the plasma membrane. Binds to QKY at plasmodesmata (PD) in root epidermal cells to promote tissue morphogenesis. In terms of tissue distribution, expressed in leaves, stems, inflorescences, flower buds and developing root epidermis.

The protein resides in the cell membrane. Its subcellular location is the cell junction. It is found in the plasmodesma. With respect to regulation, regulated at the post-transcriptional level. In terms of biological role, regulates the expression of transcription factors that define the cell fates. Acts in a non-cell-autonomous fashion, functions in a radial inside-out signaling process, and mediates cell morphogenesis and cell fate across clonally distinct cell layers in floral primordia, developing ovules, and root meristems. Seems to be required for the regulation of cell shape and the orientation of the mitotic division plane. Involved in root hair specification, in the formation of the outer integument and the shape of organs such as carpels and petals and is necessary for the shape and height of the stem. Non-functional SUB proteins are retained in the endoplasmic reticulum and degraded by endoplasmic reticulum-associated degradation (ERAD). Collaboratively with QKY and POQ, regulates cell growth anisotropy during gynoecium development, thus linking together cell-cell communication and cellular growth. Together with QKY, links RLK-dependent signal transduction and intercellular communication mediated by plasmodesmata (PD) to regulate tissue morphogenesis. The sequence is that of Protein STRUBBELIG from Arabidopsis thaliana (Mouse-ear cress).